The sequence spans 521 residues: Tigger transposable element-derived protein 6 (521 aa).

Positions 3–54 (NKGNKKRRQFSLEEKMKVVGAVDSGKRKGDVAKEFGITPSTLSTFLKDRTKF) constitute an HTH psq-type domain. DNA-binding regions (H-T-H motif) lie at residues 30 to 50 (KGDV…FLKD) and 99 to 130 (SVIR…FRDR). Positions 66 to 137 (QRKRMRSALY…RDRHGIALKA (72 aa)) constitute an HTH CENPB-type domain. The 203-residue stretch at 170-372 (YSPDDIFNAD…VKPSTVVKCW (203 aa)) folds into the DDE-1 domain.

Belongs to the tigger transposable element derived protein family.

Its subcellular location is the nucleus. This is Tigger transposable element-derived protein 6 (TIGD6) from Homo sapiens (Human).